Consider the following 170-residue polypeptide: Urease accessory protein UreE (170 aa).

The protein belongs to the UreE family.

The protein resides in the cytoplasm. Involved in urease metallocenter assembly. Binds nickel. Probably functions as a nickel donor during metallocenter assembly. This Helicobacter pylori (strain ATCC 700392 / 26695) (Campylobacter pylori) protein is Urease accessory protein UreE.